The following is a 359-amino-acid chain: Alanine racemase, biosynthetic (359 aa).

The active-site Proton acceptor; specific for D-alanine is the Lys34. Lys34 is subject to N6-(pyridoxal phosphate)lysine. A substrate-binding site is contributed by Arg129. Tyr255 acts as the Proton acceptor; specific for L-alanine in catalysis. Residue Met303 coordinates substrate.

Belongs to the alanine racemase family. It depends on pyridoxal 5'-phosphate as a cofactor.

It carries out the reaction L-alanine = D-alanine. It participates in amino-acid biosynthesis; D-alanine biosynthesis; D-alanine from L-alanine: step 1/1. It functions in the pathway cell wall biogenesis; peptidoglycan biosynthesis. Its function is as follows. Catalyzes the interconversion of L-alanine and D-alanine. Provides the D-alanine required for cell wall biosynthesis. The chain is Alanine racemase, biosynthetic (alr) from Escherichia coli O157:H7.